The sequence spans 476 residues: ATP synthase subunit beta (476 aa).

154-161 (GGAGVGKT) lines the ATP pocket.

Belongs to the ATPase alpha/beta chains family. F-type ATPases have 2 components, CF(1) - the catalytic core - and CF(0) - the membrane proton channel. CF(1) has five subunits: alpha(3), beta(3), gamma(1), delta(1), epsilon(1). CF(0) has three main subunits: a(1), b(2) and c(9-12). The alpha and beta chains form an alternating ring which encloses part of the gamma chain. CF(1) is attached to CF(0) by a central stalk formed by the gamma and epsilon chains, while a peripheral stalk is formed by the delta and b chains.

It localises to the cell inner membrane. The catalysed reaction is ATP + H2O + 4 H(+)(in) = ADP + phosphate + 5 H(+)(out). Produces ATP from ADP in the presence of a proton gradient across the membrane. The catalytic sites are hosted primarily by the beta subunits. The sequence is that of ATP synthase subunit beta from Nitrobacter winogradskyi (strain ATCC 25391 / DSM 10237 / CIP 104748 / NCIMB 11846 / Nb-255).